We begin with the raw amino-acid sequence, 258 residues long: NAD kinase (258 aa).

D51 functions as the Proton acceptor in the catalytic mechanism. NAD(+) contacts are provided by residues D51–G52, K56, N119–D120, K130, D149, T160–S165, and A184.

Belongs to the NAD kinase family. A divalent metal cation is required as a cofactor.

Its subcellular location is the cytoplasm. The enzyme catalyses NAD(+) + ATP = ADP + NADP(+) + H(+). Its function is as follows. Involved in the regulation of the intracellular balance of NAD and NADP, and is a key enzyme in the biosynthesis of NADP. Catalyzes specifically the phosphorylation on 2'-hydroxyl of the adenosine moiety of NAD to yield NADP. This chain is NAD kinase, found in Thermotoga petrophila (strain ATCC BAA-488 / DSM 13995 / JCM 10881 / RKU-1).